A 379-amino-acid chain; its full sequence is UDP-4-amino-4-deoxy-L-arabinose--oxoglutarate aminotransferase (379 aa).

Lysine 182 bears the N6-(pyridoxal phosphate)lysine mark.

This sequence belongs to the DegT/DnrJ/EryC1 family. ArnB subfamily. In terms of assembly, homodimer. The cofactor is pyridoxal 5'-phosphate.

The catalysed reaction is UDP-4-amino-4-deoxy-beta-L-arabinose + 2-oxoglutarate = UDP-beta-L-threo-pentopyranos-4-ulose + L-glutamate. The protein operates within nucleotide-sugar biosynthesis; UDP-4-deoxy-4-formamido-beta-L-arabinose biosynthesis; UDP-4-deoxy-4-formamido-beta-L-arabinose from UDP-alpha-D-glucuronate: step 2/3. It participates in bacterial outer membrane biogenesis; lipopolysaccharide biosynthesis. Functionally, catalyzes the conversion of UDP-4-keto-arabinose (UDP-Ara4O) to UDP-4-amino-4-deoxy-L-arabinose (UDP-L-Ara4N). The modified arabinose is attached to lipid A and is required for resistance to polymyxin and cationic antimicrobial peptides. This Salmonella heidelberg (strain SL476) protein is UDP-4-amino-4-deoxy-L-arabinose--oxoglutarate aminotransferase.